Reading from the N-terminus, the 264-residue chain is MAVGKNKRLTKGGKKGAKKKVVDPFSKKDWYDVKAPAMFNIRNIGKTLVTRTQGTKIASDGLKGRVFEVSLADFQNDEVAFRKFKLITEDVQGKNCLTNFHGMDLTRDKMCSMVKKWQTMIEAHVDVKTTDGYLLRLFCVGFTKKHNNQIRKTSYAQHQQVCQIRKKMMEIMTREVQTNDLKEVVNKLIPDSIGKDIEKACQSIYPLHDVFVRKVKMLKIPKFELGKLMELHGEGSSSGKATGDETGAKVERADGYEPPVQESV.

K34 bears the N6-acetyllysine; alternate mark. K34 is covalently cross-linked (Glycyl lysine isopeptide (Lys-Gly) (interchain with G-Cter in SUMO2); alternate). An N6-acetyllysine modification is found at K56. ADP-ribosyltyrosine is present on Y155. Residues G233 to V264 form a disordered region. S236 and S237 each carry phosphoserine. Over residues T242–G255 the composition is skewed to basic and acidic residues. Residue K249 is modified to N6-acetyllysine; alternate. K249 is covalently cross-linked (Glycyl lysine isopeptide (Lys-Gly) (interchain with G-Cter in SUMO2); alternate). Y256 is subject to Phosphotyrosine. Residue S263 is modified to Phosphoserine.

The protein belongs to the eukaryotic ribosomal protein eS1 family. As to quaternary structure, component of the small ribosomal subunit. Mature ribosomes consist of a small (40S) and a large (60S) subunit. The 40S subunit contains about 33 different proteins and 1 molecule of RNA (18S). The 60S subunit contains about 49 different proteins and 3 molecules of RNA (28S, 5.8S and 5S). Part of the small subunit (SSU) processome, composed of more than 70 proteins and the RNA chaperone small nucleolar RNA (snoRNA) U3. In terms of processing, ADP-ribosylated at Tyr-155 by PARP1 in presence of HPF1.

The protein resides in the cytoplasm. Its subcellular location is the nucleus. It is found in the nucleolus. Component of the small ribosomal subunit. The ribosome is a large ribonucleoprotein complex responsible for the synthesis of proteins in the cell. Part of the small subunit (SSU) processome, first precursor of the small eukaryotic ribosomal subunit. During the assembly of the SSU processome in the nucleolus, many ribosome biogenesis factors, an RNA chaperone and ribosomal proteins associate with the nascent pre-rRNA and work in concert to generate RNA folding, modifications, rearrangements and cleavage as well as targeted degradation of pre-ribosomal RNA by the RNA exosome. May play a role during erythropoiesis. This chain is Small ribosomal subunit protein eS1, found in Callithrix jacchus (White-tufted-ear marmoset).